Consider the following 353-residue polypeptide: 3'(2'),5'-bisphosphate nucleotidase 1 (353 aa).

Asp46 serves as the catalytic Proton acceptor. Positions 71, 134, 136, and 137 each coordinate Mg(2+). Thr139 acts as the Proton acceptor in catalysis. Adenosine 3',5'-bisphosphate-binding residues include Thr139, His235, Ser259, Lys262, Arg276, and Asp288. AMP is bound by residues His235, Ser259, Lys262, Arg276, and Asp288. Asp288 is a binding site for Mg(2+).

It belongs to the inositol monophosphatase superfamily. Mg(2+) serves as cofactor. Expressed in roots, leaves, stems, flowers and siliques.

The enzyme catalyses 3'-phosphoadenylyl sulfate + H2O = adenosine 5'-phosphosulfate + phosphate. The catalysed reaction is adenosine 3',5'-bisphosphate + H2O = AMP + phosphate. It carries out the reaction adenosine 2',5'-bisphosphate + H2O = AMP + phosphate. It catalyses the reaction 1D-myo-inositol 1,4-bisphosphate + H2O = 1D-myo-inositol 4-phosphate + phosphate. The enzyme catalyses 1D-myo-inositol 1,3,4-trisphosphate + H2O = 1D-myo-inositol 3,4-bisphosphate + phosphate. Its pathway is signal transduction; phosphatidylinositol signaling pathway. With respect to regulation, inhibited non-competitively by Li(+) (IC(50)=0.20 mM) and Na(+) (IC(50)=200 mM). In terms of biological role, phosphatase that converts adenosine 3'-phosphate 5'-phosphosulfate (PAPS) to adenosine 5'-phosphosulfate (APS) and 3'(2')-phosphoadenosine 5'-phosphate (PAP) to AMP. May regulate the flux of sulfur in the sulfur-activation pathway by converting PAPS to APS. May play a role in the biosynthesis of sulfate conjugates and RNA processing. Is also able to hydrolyze inositol 1,4-bisphosphate and inositol 1,3,4-trisphosphate. Could be considered as a negative regulator of abscisic acid (ABA)- and stress-responsive genes, through modulating the inositol 1,4,5-trisphosphate (IP3) turnover. Is also involved in salt tolerance. Acts as a suppressor of virus- and transgene-induced silencing. The polypeptide is 3'(2'),5'-bisphosphate nucleotidase 1 (Arabidopsis thaliana (Mouse-ear cress)).